The primary structure comprises 302 residues: 4-hydroxy-tetrahydrodipicolinate synthase (302 aa).

Position 46 (threonine 46) interacts with pyruvate. Catalysis depends on tyrosine 134, which acts as the Proton donor/acceptor. Lysine 162 serves as the catalytic Schiff-base intermediate with substrate. Pyruvate is bound at residue valine 204.

The protein belongs to the DapA family. In terms of assembly, homotetramer; dimer of dimers.

It is found in the cytoplasm. The catalysed reaction is L-aspartate 4-semialdehyde + pyruvate = (2S,4S)-4-hydroxy-2,3,4,5-tetrahydrodipicolinate + H2O + H(+). Its pathway is amino-acid biosynthesis; L-lysine biosynthesis via DAP pathway; (S)-tetrahydrodipicolinate from L-aspartate: step 3/4. Its function is as follows. Catalyzes the condensation of (S)-aspartate-beta-semialdehyde [(S)-ASA] and pyruvate to 4-hydroxy-tetrahydrodipicolinate (HTPA). This chain is 4-hydroxy-tetrahydrodipicolinate synthase, found in Xanthomonas campestris pv. campestris (strain ATCC 33913 / DSM 3586 / NCPPB 528 / LMG 568 / P 25).